A 709-amino-acid polypeptide reads, in one-letter code: Elongation factor G (709 aa).

The tr-type G domain occupies 8–297 (ANTRNIGIMA…AVIDYLPSPL (290 aa)). GTP-binding positions include 17–24 (AHVDAGKT), 81–85 (DTPGH), and 135–138 (NKMD).

The protein belongs to the TRAFAC class translation factor GTPase superfamily. Classic translation factor GTPase family. EF-G/EF-2 subfamily.

Its subcellular location is the cytoplasm. Catalyzes the GTP-dependent ribosomal translocation step during translation elongation. During this step, the ribosome changes from the pre-translocational (PRE) to the post-translocational (POST) state as the newly formed A-site-bound peptidyl-tRNA and P-site-bound deacylated tRNA move to the P and E sites, respectively. Catalyzes the coordinated movement of the two tRNA molecules, the mRNA and conformational changes in the ribosome. This is Elongation factor G from Lactococcus lactis subsp. lactis (strain IL1403) (Streptococcus lactis).